The chain runs to 808 residues: Transcription activator of gluconeogenesis PAAG_01030 (808 aa).

Residues 1–90 (MTSSVRNGSP…SAKDPLRPRR (90 aa)) form a disordered region. A compositionally biased stretch (low complexity) spans 69 to 83 (STSSTAASANNASAK). The zn(2)-C6 fungal-type DNA-binding region spans 97–125 (CFACQRAHLTCGDERPCQRCIKRGLQDTC). Residues 158–170 (AARNKVNSNSQQR) are compositionally biased toward polar residues. Disordered stretches follow at residues 158–203 (AARN…FSTP), 236–285 (SAFQ…YGST), 322–387 (GAGD…IYNQ), 442–461 (PPTNTQHQQQPQPPRISTPS), and 598–629 (TGGSSSSGVSSRGSSTYNSRNSATTTVMDNQS). A compositionally biased stretch (low complexity) spans 171–188 (NGTNSNSDNNSTNTNSNN). Polar residues-rich tracts occupy residues 189-203 (KPSHQDVSTNFFSTP), 248-279 (FDLSSNPQNHTLSPSIAQNSGTTPSSSASQNP), 339-359 (GRSSGTFTVQNFGEGSSNQSP), and 377-387 (GPTNPRNIYNQ). Composition is skewed to low complexity over residues 442 to 451 (PPTNTQHQQQ) and 598 to 619 (TGGSSSSGVSSRGSSTYNSRNS). Residues 620 to 629 (ATTTVMDNQS) show a composition bias toward polar residues.

The protein belongs to the ERT1/acuK family.

The protein localises to the nucleus. Its function is as follows. Transcription factor which regulates nonfermentable carbon utilization. Activator of gluconeogenetic genes. The sequence is that of Transcription activator of gluconeogenesis PAAG_01030 from Paracoccidioides lutzii (strain ATCC MYA-826 / Pb01) (Paracoccidioides brasiliensis).